Here is a 157-residue protein sequence, read N- to C-terminus: Crossover junction endodeoxyribonuclease RuvC (157 aa).

Active-site residues include D7, E66, and D139. Mg(2+)-binding residues include D7, E66, and D139.

Belongs to the RuvC family. In terms of assembly, homodimer which binds Holliday junction (HJ) DNA. The HJ becomes 2-fold symmetrical on binding to RuvC with unstacked arms; it has a different conformation from HJ DNA in complex with RuvA. In the full resolvosome a probable DNA-RuvA(4)-RuvB(12)-RuvC(2) complex forms which resolves the HJ. Mg(2+) serves as cofactor.

It localises to the cytoplasm. The catalysed reaction is Endonucleolytic cleavage at a junction such as a reciprocal single-stranded crossover between two homologous DNA duplexes (Holliday junction).. Functionally, the RuvA-RuvB-RuvC complex processes Holliday junction (HJ) DNA during genetic recombination and DNA repair. Endonuclease that resolves HJ intermediates. Cleaves cruciform DNA by making single-stranded nicks across the HJ at symmetrical positions within the homologous arms, yielding a 5'-phosphate and a 3'-hydroxyl group; requires a central core of homology in the junction. The consensus cleavage sequence is 5'-(A/T)TT(C/G)-3'. Cleavage occurs on the 3'-side of the TT dinucleotide at the point of strand exchange. HJ branch migration catalyzed by RuvA-RuvB allows RuvC to scan DNA until it finds its consensus sequence, where it cleaves and resolves the cruciform DNA. The polypeptide is Crossover junction endodeoxyribonuclease RuvC (Campylobacter concisus (strain 13826)).